Consider the following 444-residue polypeptide: Structure-specific endonuclease subunit SLX1 (444 aa).

In terms of domain architecture, GIY-YIG spans 23-105 (AFYCCYLLRS…QNTKVSRHAD (83 aa)). The SLX1-type zinc finger occupies 240-295 (CGVCKQRLILQHDIIAVCSHSSCHCAAHLSCLSSHFLKDKDSDSELIPREGTCPAC). Disordered regions lie at residues 323–355 (RRRR…DALQ) and 386–444 (AHRP…EVIE).

The protein belongs to the SLX1 family. As to quaternary structure, forms a heterodimer with SLX4. The cofactor is a divalent metal cation.

It is found in the nucleus. Its function is as follows. Catalytic subunit of the SLX1-SLX4 structure-specific endonuclease that resolves DNA secondary structures generated during DNA repair and recombination. Has endonuclease activity towards branched DNA substrates, introducing single-strand cuts in duplex DNA close to junctions with ss-DNA. The chain is Structure-specific endonuclease subunit SLX1 from Paracoccidioides brasiliensis (strain Pb18).